We begin with the raw amino-acid sequence, 487 residues long: Glutamate--tRNA ligase (487 aa).

Residues 11–21 carry the 'HIGH' region motif; the sequence is PSPTGYPHLGN. Positions 108, 110, 135, and 137 each coordinate Zn(2+). A 'KMSKS' region motif is present at residues 245–249; sequence KLSKR. Lys-248 is an ATP binding site.

It belongs to the class-I aminoacyl-tRNA synthetase family. Glutamate--tRNA ligase type 1 subfamily. Monomer. The cofactor is Zn(2+).

It is found in the cytoplasm. The enzyme catalyses tRNA(Glu) + L-glutamate + ATP = L-glutamyl-tRNA(Glu) + AMP + diphosphate. Its function is as follows. Catalyzes the attachment of glutamate to tRNA(Glu) in a two-step reaction: glutamate is first activated by ATP to form Glu-AMP and then transferred to the acceptor end of tRNA(Glu). The polypeptide is Glutamate--tRNA ligase (Dehalococcoides mccartyi (strain ATCC BAA-2100 / JCM 16839 / KCTC 5957 / BAV1)).